We begin with the raw amino-acid sequence, 592 residues long: Alpha-1,3-galactosidase B (592 aa).

The N-terminal stretch at 1 to 14 is a signal peptide; that stretch reads MKLLSVLSLSLVLS. Cys-15 carries N-palmitoyl cysteine lipidation. A lipid anchor (S-diacylglycerol cysteine) is attached at Cys-15. PbH1 repeat units follow at residues 429 to 451, 452 to 474, and 485 to 538; these read TPEV…LFST, PRKT…LLCG, and CRHV…VIED.

Belongs to the glycosyl hydrolase 110 family. B subfamily.

It is found in the cell membrane. It carries out the reaction Hydrolysis of terminal, non-reducing branched (1-&gt;3)-alpha-D-galactosidic residues, producing free D-galactose.. The catalysed reaction is Hydrolysis of terminal, non-reducing linear (1-&gt;3)-alpha-D-galactosidic residues, producing free D-galactose.. The enzyme catalyses Hydrolysis of terminal, non-reducing alpha-D-galactose residues in alpha-D-galactosides, including galactose oligosaccharides, galactomannans and galactolipids.. Functionally, alpha-galactosidase. Removes both branched alpha-1,3-linked galactose residues of blood group B antigens and linear alpha-1,3-linked galactose structures. The chain is Alpha-1,3-galactosidase B (glaB1) from Phocaeicola vulgatus (strain ATCC 8482 / DSM 1447 / JCM 5826 / CCUG 4940 / NBRC 14291 / NCTC 11154) (Bacteroides vulgatus).